Consider the following 810-residue polypeptide: Eukaryotic translation initiation factor 3 subunit C (810 aa).

Over residues 1–11 (MSRFFATNYNY) the composition is skewed to polar residues. The disordered stretch occupies residues 1 to 98 (MSRFFATNYN…DSDESDEEDG (98 aa)). The span at 12–33 (DETSSSSEEDLLSSSEELLSSS) shows a compositional bias: low complexity. Residues 34–58 (EEGELSDDSLFNDESESESDFDSDD) are compositionally biased toward acidic residues. The PCI domain occupies 605 to 780 (YHQHINLDLV…TYIVIEKGDE (176 aa)).

Belongs to the eIF-3 subunit C family. Component of the eukaryotic translation initiation factor 3 (eIF-3) complex.

The protein resides in the cytoplasm. Its function is as follows. Component of the eukaryotic translation initiation factor 3 (eIF-3) complex, which is involved in protein synthesis of a specialized repertoire of mRNAs and, together with other initiation factors, stimulates binding of mRNA and methionyl-tRNAi to the 40S ribosome. The eIF-3 complex specifically targets and initiates translation of a subset of mRNAs involved in cell proliferation. The sequence is that of Eukaryotic translation initiation factor 3 subunit C from Candida glabrata (strain ATCC 2001 / BCRC 20586 / JCM 3761 / NBRC 0622 / NRRL Y-65 / CBS 138) (Yeast).